A 280-amino-acid chain; its full sequence is Cis-2,3-dihydrobiphenyl-2,3-diol dehydrogenase (280 aa).

NAD(+) is bound at residue 9 to 33; that stretch reads LVTGGCAGLGRAIVDRFVCEGARVA. Serine 142 provides a ligand contact to substrate. Catalysis depends on tyrosine 155, which acts as the Proton acceptor.

It belongs to the short-chain dehydrogenases/reductases (SDR) family.

It carries out the reaction (2R,3S)-3-phenylcyclohexa-3,5-diene-1,2-diol + NAD(+) = biphenyl-2,3-diol + NADH + H(+). It participates in xenobiotic degradation; biphenyl degradation; 2-hydroxy-2,4-pentadienoate and benzoate from biphenyl: step 2/4. The chain is Cis-2,3-dihydrobiphenyl-2,3-diol dehydrogenase (bphB) from Rhodococcus globerulus.